Consider the following 119-residue polypeptide: Auxin-responsive protein SAUR78 (119 aa).

It belongs to the ARG7 family.

In terms of biological role, may be involved in the regulation of ethylene receptor signaling. Promotes cell expansion and plant growth. This is Auxin-responsive protein SAUR78 from Arabidopsis thaliana (Mouse-ear cress).